The following is a 128-amino-acid chain: Cionin (128 aa).

Positions 1-22 (MGSNIVIYFSIIVIVTLNVNGV) are cleaved as a signal peptide. Positions 23-108 (PASDLFKSVS…NQGHMQRMDR (86 aa)) are excised as a propeptide. A sulfotyrosine mark is found at tyrosine 110 and tyrosine 111. At phenylalanine 116 the chain carries Phenylalanine amide. The propeptide occupies 120–128 (AIEDVDYEY).

The protein belongs to the gastrin/cholecystokinin family. As to expression, expressed in both the gut and the neural ganglion.

The protein localises to the secreted. This is Cionin from Ciona intestinalis (Transparent sea squirt).